The following is a 142-amino-acid chain: MSLYVKCVKLSNNAIIPNRSMSGSAGYDLYSAYSYTVKPYNRILVRTDICLMIPDKCYGRISPRSGLSLNYNIDIGGGVIDSDYRGEIGIVFINNGCSDFNIKVGDRIAQIIFERVEYPIMEEVKCLEDTERGNSGFGSSGM.

It belongs to the dUTPase family. Mg(2+) is required as a cofactor.

It carries out the reaction dUTP + H2O = dUMP + diphosphate + H(+). In terms of biological role, this enzyme is involved in nucleotide metabolism: it produces dUMP, the immediate precursor of thymidine nucleotides and it decreases the intracellular concentration of dUTP so that uracil cannot be incorporated into DNA. The chain is Deoxyuridine 5'-triphosphate nucleotidohydrolase (DUT) from Swinepox virus (strain Kasza) (SWPV).